The primary structure comprises 99 residues: Protein MOST-1 (99 aa).

As to quaternary structure, interacts with TSPO, IGHM and IGHD. Expressed in the heart, kidney, liver, pancreas, small intestine, ovary, testis, prostate and thymus. Expressed in all of the cancer cell lines tested.

It localises to the cytoplasm. The protein localises to the microsome membrane. It is found in the endoplasmic reticulum membrane. In terms of biological role, may be involved in cell survival, proliferation and progression of cancer cells. The chain is Protein MOST-1 (C8orf17) from Homo sapiens (Human).